The sequence spans 311 residues: Ribosomal protein L11 methyltransferase (311 aa).

S-adenosyl-L-methionine contacts are provided by Thr162, Gly183, Asp205, and Asn248.

This sequence belongs to the methyltransferase superfamily. PrmA family.

The protein resides in the cytoplasm. The catalysed reaction is L-lysyl-[protein] + 3 S-adenosyl-L-methionine = N(6),N(6),N(6)-trimethyl-L-lysyl-[protein] + 3 S-adenosyl-L-homocysteine + 3 H(+). Methylates ribosomal protein L11. The chain is Ribosomal protein L11 methyltransferase from Bacillus pumilus (strain SAFR-032).